Here is a 139-residue protein sequence, read N- to C-terminus: uncharacterized protein (139 aa).

This is an uncharacterized protein from Invertebrate iridescent virus 3 (IIV-3).